Consider the following 874-residue polypeptide: DNA primase (874 aa).

The CHC2-type zinc-finger motif lies at 786–824; sequence CLRHTHRASSKNVRVFLVLYYTSQAITVTFMSQCFAGRC. Residues 848 to 857 show a composition bias toward polar residues; that stretch reads ASQDSTTSQL. The interval 848–874 is disordered; the sequence is ASQDSTTSQLARRRDRQDGSFSETLPN.

The protein belongs to the herpesviridae DNA primase family. In terms of assembly, associates with the helicase and the primase-associated factor to form the helicase-primase factor.

Its subcellular location is the host nucleus. Its function is as follows. Essential component of the helicase/primase complex. Unwinds the DNA at the replication forks and generates single-stranded DNA for both leading and lagging strand synthesis. The primase initiates primer synthesis and thereby produces large amount of short RNA primers on the lagging strand that the polymerase elongates using dNTPs. This is DNA primase from Epstein-Barr virus (strain B95-8) (HHV-4).